Here is a 144-residue protein sequence, read N- to C-terminus: Actin-associated protein FAM107A (144 aa).

The stretch at 67–94 (LQRVLEHRRRNQLIKKKKEELEAKRLQC) forms a coiled coil. Positions 74–84 (RRRNQLIKKKK) match the Nuclear localization signal motif. The tract at residues 105–124 (QRLNQLEKPPEKEEDHAPEF) is disordered. Residues 112 to 124 (KPPEKEEDHAPEF) are compositionally biased toward basic and acidic residues.

It belongs to the FAM107 family. In terms of assembly, interacts with ACTB. Interacts with COMMD1; this interaction stabilizes COMMD1 in the nucleus. Interacts with MAP1A. Interacts with PRDX1. Interacts with F-actin.

It is found in the nucleus. Its subcellular location is the cytoplasm. The protein resides in the cytoskeleton. It localises to the stress fiber. The protein localises to the cell junction. It is found in the focal adhesion. Its subcellular location is the cell projection. The protein resides in the ruffle membrane. It localises to the synapse. In terms of biological role, stress-inducible actin-binding protein that plays a role in synaptic and cognitive functions by modulating actin filamentous (F-actin) dynamics. Mediates polymerization of globular actin to F-actin. Also binds to, stabilizes and bundles F-actin. Involved in synaptic function by regulating neurite outgrowth in an actin-dependent manner and for the acquisition of hippocampus-dependent cognitive function, such as learning and long-term memory. Plays a role in the actin and microtubule cytoskeleton organization; negatively regulates focal adhesion (FA) assembly promoting malignant glial cell migration in an actin-, microtubule- and MAP1A-dependent manner. Also involved in neuroblastoma G1/S phase cell cycle progression and cell proliferation inhibition by stimulating ubiquitination of NF-kappa-B subunit RELA and NF-kappa-B degradation in a COMMD1- and actin-dependent manner. May play a role in tumor development. This Pan troglodytes (Chimpanzee) protein is Actin-associated protein FAM107A (FAM107A).